Reading from the N-terminus, the 185-residue chain is Adenine phosphoribosyltransferase (185 aa).

This sequence belongs to the purine/pyrimidine phosphoribosyltransferase family. In terms of assembly, homodimer.

Its subcellular location is the cytoplasm. The enzyme catalyses AMP + diphosphate = 5-phospho-alpha-D-ribose 1-diphosphate + adenine. Its pathway is purine metabolism; AMP biosynthesis via salvage pathway; AMP from adenine: step 1/1. In terms of biological role, catalyzes a salvage reaction resulting in the formation of AMP, that is energically less costly than de novo synthesis. This Arthrobacter sp. (strain FB24) protein is Adenine phosphoribosyltransferase.